The chain runs to 507 residues: Protein zntA (507 aa).

The N-terminal stretch at 1–18 is a signal peptide; sequence MSIFAYSILAGLAPLLSS. The N-linked (GlcNAc...) asparagine glycan is linked to Asn-31. Residues 35–55 traverse the membrane as a helical segment; that stretch reads FHILLCISAGLLFAVASLELI. The disordered stretch occupies residues 124–179; that stretch reads GLNLNNLNQATNLDNNEEDNDNLDNDGENEIENDHDHDHQEDEGGDNDHDHESEEK. Over residues 125-137 the composition is skewed to low complexity; that stretch reads LNLNNLNQATNLD. Over residues 138 to 154 the composition is skewed to acidic residues; that stretch reads NNEEDNDNLDNDGENEI. Residues 155-179 show a composition bias toward basic and acidic residues; the sequence is ENDHDHDHQEDEGGDNDHDHESEEK. Residues 185 to 205 traverse the membrane as a helical segment; the sequence is IPMYGIGFGFAILIIVESIFS. The tract at residues 209-264 is disordered; that stretch reads GGGGGGGHHSHSHGSLSSSSSNDVISDYISNNNSNNINNNDDDNNNNNNNNDDDDD. Residues 221 to 258 show a composition bias toward low complexity; the sequence is HGSLSSSSSNDVISDYISNNNSNNINNNDDDNNNNNNN. Residues Asn-240, Asn-298, Asn-328, Asn-342, and Asn-351 are each glycosylated (N-linked (GlcNAc...) asparagine). The segment at 305-350 is disordered; that stretch reads PNIASPVMNKDNNNNDKDKNRNSNKSDIKNSGSINNGNNSGNNNNN. Residues 317–332 show a composition bias toward basic and acidic residues; that stretch reads NNNDKDKNRNSNKSDI. The span at 333 to 350 shows a compositional bias: low complexity; that stretch reads KNSGSINNGNNSGNNNNN. Helical transmembrane passes span 355 to 375, 388 to 408, 422 to 442, 451 to 471, and 486 to 506; these read LTIT…VVIS, VALA…SLIL, FFYF…SSFL, GAFV…TAIL, and LFSI…FHGA.

The protein belongs to the ZIP transporter (TC 2.A.5) family.

The protein resides in the membrane. May transport divalent cations. May participate, with dstA, in the regulation of the differentiation of stalk cells during development. In Dictyostelium discoideum (Social amoeba), this protein is Protein zntA (zntA).